The sequence spans 342 residues: L-threonine 3-dehydrogenase (342 aa).

Position 38 (Cys38) interacts with Zn(2+). Residues Thr40 and His43 each act as charge relay system in the active site. Zn(2+) is bound by residues His63, Glu64, Cys93, Cys96, Cys99, and Cys107. NAD(+) is bound by residues Ile175, Asp195, Arg200, 262-264 (LGI), and 286-287 (IY).

This sequence belongs to the zinc-containing alcohol dehydrogenase family. In terms of assembly, homotetramer. Zn(2+) is required as a cofactor.

Its subcellular location is the cytoplasm. It catalyses the reaction L-threonine + NAD(+) = (2S)-2-amino-3-oxobutanoate + NADH + H(+). It participates in amino-acid degradation; L-threonine degradation via oxydo-reductase pathway; glycine from L-threonine: step 1/2. Its function is as follows. Catalyzes the NAD(+)-dependent oxidation of L-threonine to 2-amino-3-ketobutyrate. The protein is L-threonine 3-dehydrogenase of Burkholderia cenocepacia (strain HI2424).